The chain runs to 140 residues: Small ribosomal subunit protein uS12 (140 aa).

At aspartate 102 the chain carries 3-methylthioaspartic acid. The disordered stretch occupies residues 121–140 (ANRQQSRSKYGAKKPKAAKK). Residues 130–140 (YGAKKPKAAKK) are compositionally biased toward basic residues.

The protein belongs to the universal ribosomal protein uS12 family. As to quaternary structure, part of the 30S ribosomal subunit. Contacts proteins S8 and S17. May interact with IF1 in the 30S initiation complex.

With S4 and S5 plays an important role in translational accuracy. Functionally, interacts with and stabilizes bases of the 16S rRNA that are involved in tRNA selection in the A site and with the mRNA backbone. Located at the interface of the 30S and 50S subunits, it traverses the body of the 30S subunit contacting proteins on the other side and probably holding the rRNA structure together. The combined cluster of proteins S8, S12 and S17 appears to hold together the shoulder and platform of the 30S subunit. This Alkaliphilus oremlandii (strain OhILAs) (Clostridium oremlandii (strain OhILAs)) protein is Small ribosomal subunit protein uS12.